The primary structure comprises 437 residues: Sorting nexin-30 (437 aa).

The tract at residues Met1–Met45 is disordered. Residue Thr38 is modified to Phosphothreonine. Ser40 is subject to Phosphoserine. A PX domain is found at Arg89 to Ala210. A 1,2-diacyl-sn-glycero-3-phospho-(1D-myo-inositol-3-phosphate) contacts are provided by Arg132, Gln134, Lys162, and Arg176. The 204-residue stretch at Lys234–Lys437 folds into the BAR domain.

The protein belongs to the sorting nexin family. Heterodimer; heterodimerizes with SNX4.

It localises to the early endosome membrane. Functionally, involved in the regulation of endocytosis and in several stages of intracellular trafficking. Together with SNX4, involved in autophagosome assembly. This Mus musculus (Mouse) protein is Sorting nexin-30.